A 90-amino-acid polypeptide reads, in one-letter code: Darcynin 1 (90 aa).

The protein belongs to the darcynin family.

The sequence is that of Darcynin 1 from Acinetobacter baumannii (strain ATCC 17978 / DSM 105126 / CIP 53.77 / LMG 1025 / NCDC KC755 / 5377).